The chain runs to 321 residues: Glycerol-3-phosphate dehydrogenase [NAD(P)+] (321 aa).

NADPH is bound by residues Ser14, Phe15, Arg35, and Lys109. The sn-glycerol 3-phosphate site is built by Lys109 and Gly137. Residue Ala141 coordinates NADPH. Sn-glycerol 3-phosphate contacts are provided by Lys192, Asp252, Ser262, Arg263, and Asn264. The Proton acceptor role is filled by Lys192. Arg263 provides a ligand contact to NADPH. 2 residues coordinate NADPH: Leu287 and Glu289.

This sequence belongs to the NAD-dependent glycerol-3-phosphate dehydrogenase family.

The protein localises to the cytoplasm. It carries out the reaction sn-glycerol 3-phosphate + NAD(+) = dihydroxyacetone phosphate + NADH + H(+). The catalysed reaction is sn-glycerol 3-phosphate + NADP(+) = dihydroxyacetone phosphate + NADPH + H(+). It participates in membrane lipid metabolism; glycerophospholipid metabolism. Catalyzes the reduction of the glycolytic intermediate dihydroxyacetone phosphate (DHAP) to sn-glycerol 3-phosphate (G3P), the key precursor for phospholipid synthesis. This chain is Glycerol-3-phosphate dehydrogenase [NAD(P)+], found in Rickettsia felis (strain ATCC VR-1525 / URRWXCal2) (Rickettsia azadi).